A 166-amino-acid polypeptide reads, in one-letter code: Phospholipase A2 inhibitor clone 10 (166 aa).

Positions 1-19 (MRLILLSSLLLLGIFLANG) are cleaved as a signal peptide. The region spanning 46-161 (LKYSFLTVHR…CDDNLLVVCE (116 aa)) is the C-type lectin domain. Cystine bridges form between Cys-83–Cys-160 and Cys-138–Cys-152. Asn-122 is a glycosylation site (N-linked (GlcNAc...) asparagine).

It belongs to the alpha-type phospholipase A2 inhibitor family. As to quaternary structure, homotrimer; non-covalently linked. In terms of tissue distribution, expressed by the liver.

The protein resides in the secreted. This phospholipase A2 inhibitor binds directly phospholipase A2 in the presence or absence of calcium. The polypeptide is Phospholipase A2 inhibitor clone 10 (Bothrops moojeni (Lance-headed viper)).